The chain runs to 367 residues: Phosphoglycerate kinase (367 aa).

(2R)-3-phosphoglycerate contacts are provided by Val1, Asp2, Phe3, Asn4, Arg17, Ser40, His41, Gly43, Arg44, Leu98, Arg99, His146, and Arg147. Position 190 (Gly190) interacts with ADP. Gly190 contributes to the CDP binding site. 2 residues coordinate AMP: Ala191 and Lys192. Ala191 serves as a coordination point for ATP. Ala191 contributes to the Mg(2+) binding site. Mg(2+) is bound by residues Ala194 and Asp195. Asp195 lines the CDP pocket. Lys196 provides a ligand contact to AMP. Residue Lys196 coordinates ATP. Gly214 provides a ligand contact to ADP. Gly214 is a CDP binding site. Positions 215 and 289 each coordinate AMP. ATP contacts are provided by Gly215 and Gly289. Residues Gly314 and Phe319 each coordinate CDP. Residue Phe319 participates in ADP binding. Glu320 is a binding site for AMP. 3 residues coordinate ATP: Glu320, Asp351, and Thr352. Position 351 (Asp351) interacts with Mg(2+).

The protein belongs to the phosphoglycerate kinase family. In terms of assembly, monomer. Requires Mg(2+) as cofactor.

It catalyses the reaction (2R)-3-phosphoglycerate + ATP = (2R)-3-phospho-glyceroyl phosphate + ADP. It functions in the pathway carbohydrate degradation; glycolysis; pyruvate from D-glyceraldehyde 3-phosphate: step 2/5. The protein is Phosphoglycerate kinase (PGK) of Paramecium primaurelia.